The primary structure comprises 356 residues: NADH-quinone oxidoreductase subunit H (356 aa).

The next 9 membrane-spanning stretches (helical) occupy residues 16 to 36, 52 to 72, 85 to 105, 117 to 137, 163 to 183, 201 to 221, 254 to 274, 295 to 315, and 334 to 354; these read IAVL…AFLL, PNVV…KFVF, LYLL…AVVP, VGIL…IIGG, IGFI…SEII, WPMP…ISAL, FMVG…ILFF, AWYF…FAMV, and IFLP…VYGP.

It belongs to the complex I subunit 1 family. In terms of assembly, NDH-1 is composed of 14 different subunits. Subunits NuoA, H, J, K, L, M, N constitute the membrane sector of the complex.

Its subcellular location is the cell inner membrane. It carries out the reaction a quinone + NADH + 5 H(+)(in) = a quinol + NAD(+) + 4 H(+)(out). Its function is as follows. NDH-1 shuttles electrons from NADH, via FMN and iron-sulfur (Fe-S) centers, to quinones in the respiratory chain. The immediate electron acceptor for the enzyme in this species is believed to be ubiquinone. Couples the redox reaction to proton translocation (for every two electrons transferred, four hydrogen ions are translocated across the cytoplasmic membrane), and thus conserves the redox energy in a proton gradient. This subunit may bind ubiquinone. The polypeptide is NADH-quinone oxidoreductase subunit H (Maricaulis maris (strain MCS10) (Caulobacter maris)).